Consider the following 154-residue polypeptide: Melatonin receptor type 1A (154 aa).

The Cytoplasmic portion of the chain corresponds to 1-19; that stretch reads YCYICHSLKYDRWYSNRNS. Residues 20–40 form a helical membrane-spanning segment; it reads LCCVFLICVLTLVAIVPNLCM. The Extracellular segment spans residues 41-62; the sequence is GTLQYDPRIYSCTFAQSVSSAY. Residues 63-83 form a helical membrane-spanning segment; the sequence is TIAVVVFHFLVPMVIVIFRYL. The Cytoplasmic portion of the chain corresponds to 84–115; sequence RIWVLVLQIRWRAKPENNPRLKPQDFRNFVTM. Residues 116 to 136 traverse the membrane as a helical segment; sequence FVVFVLFAICWAPLNFIGLAV. At 137–149 the chain is on the extracellular side; the sequence is ASDPASMAPRIPE.

This sequence belongs to the G-protein coupled receptor 1 family.

The protein resides in the cell membrane. High affinity receptor for melatonin. Likely to mediate the reproductive and circadian actions of melatonin. The activity of this receptor is mediated by pertussis toxin sensitive G proteins that inhibit adenylate cyclase activity. This is Melatonin receptor type 1A (MTNR1A) from Sus scrofa (Pig).